A 165-amino-acid polypeptide reads, in one-letter code: Nucleotide-binding protein PMT9312_0481 (165 aa).

This sequence belongs to the YajQ family.

Functionally, nucleotide-binding protein. The polypeptide is Nucleotide-binding protein PMT9312_0481 (Prochlorococcus marinus (strain MIT 9312)).